The primary structure comprises 250 residues: Eukaryotic translation initiation factor 2 subunit 2 (250 aa).

The segment at 193 to 217 adopts a C4-type zinc-finger fold; that stretch reads CHTCKSPETQLTKDTRLFFLQCTNC.

It belongs to the eIF-2-beta/eIF-5 family. In terms of assembly, eukaryotic translation initiation factor 2 eIF2 is a heterotrimeric complex composed of an alpha, a beta and a gamma subunit.

The protein localises to the cytoplasm. It localises to the cytosol. Functionally, component of the eIF2 complex that functions in the early steps of protein synthesis by forming a ternary complex with GTP and initiator tRNA. This complex binds to a 40S ribosomal subunit, followed by mRNA binding to form a 43S pre-initiation complex (43S PIC). Junction of the 60S ribosomal subunit to form the 80S initiation complex is preceded by hydrolysis of the GTP bound to eIF2 and release of an eIF2-GDP binary complex. In order for eIF2 to recycle and catalyze another round of initiation, the GDP bound to eIF2 must exchange with GTP by way of a reaction catalyzed by eIF2B. This chain is Eukaryotic translation initiation factor 2 subunit 2, found in Caenorhabditis elegans.